The primary structure comprises 155 residues: MSDNDQQLRVSKIQNGTVIDHIAGGQALNVLAILGIDGTSGDSVSVAMNMPSDRLGHKDVVKVEGRELSQNEVDVLSLIAPAATINIIRDYEVVEKGRVERPSVVEGVLECPNHNCITTENEPVDSRFAVGDDGVRCEYCDTIIRDDLPAHILAE.

Zn(2+) is bound by residues Cys-111, Cys-116, Cys-137, and Cys-140.

This sequence belongs to the PyrI family. In terms of assembly, contains catalytic and regulatory chains. Zn(2+) is required as a cofactor.

Functionally, involved in allosteric regulation of aspartate carbamoyltransferase. The protein is Aspartate carbamoyltransferase regulatory chain of Haloarcula marismortui (strain ATCC 43049 / DSM 3752 / JCM 8966 / VKM B-1809) (Halobacterium marismortui).